The following is a 489-amino-acid chain: Transcription factor TGAL11 (489 aa).

Positions Ala-87–Thr-99 are enriched in low complexity. Positions Ala-87–Asp-181 are disordered. The span at Ser-121–Asp-139 shows a compositional bias: polar residues. A compositionally biased stretch (low complexity) spans Ala-148–Gln-159. The span at His-171–Asp-181 shows a compositional bias: basic and acidic residues. The bZIP domain maps to Asp-181–Arg-225. The segment at Lys-183 to Lys-203 is basic motif. The tract at residues Leu-209–Leu-223 is leucine-zipper. The DOG1 domain occupies Ala-245–Arg-460.

The protein belongs to the bZIP family.

Its subcellular location is the nucleus. Its function is as follows. Transcriptional regulator involved in defense response. The polypeptide is Transcription factor TGAL11 (Oryza sativa subsp. japonica (Rice)).